A 182-amino-acid chain; its full sequence is MSDNLALHGTTILCLKKNEEIIIAADGQVSHGNTVLKSTARKLRTIANNKIIVGFAGSTADGLALFEKLEIKIEQYNSNLLRSAVELAKDWRNDKYLRRLEAMMIVADRSHILILTGNGDVIEPENNIAAIGSGGLFALSAARALMSYENNLTAEEIALKSMNIAADLCVFSNHNIIMEKVV.

T10 is an active-site residue. Residues A166, C169, and S172 each coordinate Na(+).

Belongs to the peptidase T1B family. HslV subfamily. As to quaternary structure, a double ring-shaped homohexamer of HslV is capped on each side by a ring-shaped HslU homohexamer. The assembly of the HslU/HslV complex is dependent on binding of ATP.

The protein localises to the cytoplasm. The enzyme catalyses ATP-dependent cleavage of peptide bonds with broad specificity.. Allosterically activated by HslU binding. Functionally, protease subunit of a proteasome-like degradation complex believed to be a general protein degrading machinery. The polypeptide is ATP-dependent protease subunit HslV (Rickettsia typhi (strain ATCC VR-144 / Wilmington)).